An 89-amino-acid chain; its full sequence is uncharacterized protein (89 aa).

A run of 3 helical transmembrane segments spans residues Thr5–Ala27, Leu32–Leu51, and Leu63–Ala85.

It is found in the cell membrane. This is an uncharacterized protein from Bacillus subtilis (strain 168).